The chain runs to 384 residues: Queuine tRNA-ribosyltransferase (384 aa).

The active-site Proton acceptor is the aspartate 92. Substrate is bound by residues 92 to 96 (DSGGF), aspartate 146, glutamine 190, and glycine 217. An RNA binding region spans residues 248–254 (GVGRPED). Aspartate 267 (nucleophile) is an active-site residue. The RNA binding; important for wobble base 34 recognition stretch occupies residues 272-276 (TRHAR). Residues cysteine 305, cysteine 307, cysteine 310, and histidine 337 each contribute to the Zn(2+) site.

This sequence belongs to the queuine tRNA-ribosyltransferase family. Homodimer. Within each dimer, one monomer is responsible for RNA recognition and catalysis, while the other monomer binds to the replacement base PreQ1. Requires Zn(2+) as cofactor.

It carries out the reaction 7-aminomethyl-7-carbaguanine + guanosine(34) in tRNA = 7-aminomethyl-7-carbaguanosine(34) in tRNA + guanine. Its pathway is tRNA modification; tRNA-queuosine biosynthesis. Functionally, catalyzes the base-exchange of a guanine (G) residue with the queuine precursor 7-aminomethyl-7-deazaguanine (PreQ1) at position 34 (anticodon wobble position) in tRNAs with GU(N) anticodons (tRNA-Asp, -Asn, -His and -Tyr). Catalysis occurs through a double-displacement mechanism. The nucleophile active site attacks the C1' of nucleotide 34 to detach the guanine base from the RNA, forming a covalent enzyme-RNA intermediate. The proton acceptor active site deprotonates the incoming PreQ1, allowing a nucleophilic attack on the C1' of the ribose to form the product. After dissociation, two additional enzymatic reactions on the tRNA convert PreQ1 to queuine (Q), resulting in the hypermodified nucleoside queuosine (7-(((4,5-cis-dihydroxy-2-cyclopenten-1-yl)amino)methyl)-7-deazaguanosine). The chain is Queuine tRNA-ribosyltransferase from Xylella fastidiosa (strain M12).